The following is a 130-amino-acid chain: Small ribosomal subunit protein uS9 (130 aa).

This sequence belongs to the universal ribosomal protein uS9 family.

This chain is Small ribosomal subunit protein uS9, found in Halorhodospira halophila (strain DSM 244 / SL1) (Ectothiorhodospira halophila (strain DSM 244 / SL1)).